A 299-amino-acid chain; its full sequence is Mitochondrial 2-oxodicarboxylate carrier (299 aa).

3 Solcar repeats span residues 11–100 (REAS…YKKL), 107–196 (SPAL…VKNM), and 205–294 (LEFL…TYSW). A run of 6 helical transmembrane segments spans residues 17–37 (IVAG…LDVV), 70–89 (FGFY…KRAV), 113–133 (TIAG…FEVV), 167–187 (GLNK…MVYF), 205–225 (LEFL…SVIN), and 277–297 (LGPG…WLQE).

This sequence belongs to the mitochondrial carrier (TC 2.A.29) family.

Its subcellular location is the mitochondrion inner membrane. The catalysed reaction is 2-oxoadipate(in) + 2-oxoglutarate(out) = 2-oxoadipate(out) + 2-oxoglutarate(in). It carries out the reaction hexanedioate(in) + 2-oxoglutarate(out) = hexanedioate(out) + 2-oxoglutarate(in). The enzyme catalyses L-2-aminoadipate(in) + 2-oxoglutarate(out) = L-2-aminoadipate(out) + 2-oxoglutarate(in). It catalyses the reaction glutarate(in) + 2-oxoglutarate(out) = glutarate(out) + 2-oxoglutarate(in). The catalysed reaction is 2-oxoheptanedioate(in) + 2-oxoglutarate(out) = 2-oxoheptanedioate(out) + 2-oxoglutarate(in). It carries out the reaction heptanedioate(in) + 2-oxoglutarate(out) = heptanedioate(out) + 2-oxoglutarate(in). The enzyme catalyses citrate(in) + 2-oxoglutarate(out) = citrate(out) + 2-oxoglutarate(in). Transports dicarboxylates across the inner membranes of mitochondria by a counter-exchange mechanism. Can transport 2-oxoadipate (2-oxohexanedioate), 2-oxoglutarate, adipate (hexanedioate), glutarate, and to a lesser extent, pimelate (heptanedioate), 2-oxopimelate (2-oxoheptanedioate), 2-aminoadipate (2-aminohexanedioate), oxaloacetate, and citrate. Plays a central role in catabolism of lysine, hydroxylysine, and tryptophan, by transporting common metabolite intermediates (such as 2-oxoadipate) into the mitochondria, where it is converted into acetyl-CoA and can enter the citric acid (TCA) cycle. The protein is Mitochondrial 2-oxodicarboxylate carrier (SLC25A21) of Pongo abelii (Sumatran orangutan).